The chain runs to 209 residues: PRA1 family protein E (209 aa).

The tract at residues 1–20 is disordered; sequence MNQKPPPYGYGGAGGGGVGP. The span at 9–19 shows a compositional bias: gly residues; it reads GYGGAGGGGVG. The next 3 membrane-spanning stretches (helical) occupy residues 90–110, 132–152, and 155–175; these read IVFLGLIYHPMSMIAFIVVFI, VDDKIVLVLLSLVTVLALVYT, and GENVLVSLIIGLLIVGAHGAF.

It belongs to the PRA1 family. As to quaternary structure, interacts with PRA1B1, PRA1B2, PRA1B3, PRA1B4, PRA1B5 and PRA1B6. In terms of tissue distribution, expressed in hypocotyls, roots, lateral roots, columella cells, leaves and shoot apex.

It is found in the endosome membrane. In terms of biological role, may be involved in both secretory and endocytic intracellular trafficking in the endosomal/prevacuolar compartments. The polypeptide is PRA1 family protein E (PRA1E) (Arabidopsis thaliana (Mouse-ear cress)).